The chain runs to 330 residues: Interleukin-12 subunit beta (330 aa).

The signal sequence occupies residues 1–22; sequence MHPQQLVVSWFSLVLLASPIMA. Residues 23–106 enclose the Ig-like C2-type domain; it reads IWELEKNVYV…LSHSLLLLHK (84 aa). A disulfide bond links Cys50 and Cys90. Asn136 and Asn224 each carry an N-linked (GlcNAc...) asparagine glycan. The region spanning 239–330 is the Fibronectin type-III domain; the sequence is PPKNLQLKPL…WSEWASVSCS (92 aa).

Belongs to the IL-12B family. Heterodimer with IL12A; disulfide-linked. The heterodimer is known as interleukin IL-12. Heterodimer with IL23A; disulfide-linked. The heterodimer is known as interleukin IL-23. Also secreted as a monomer. Interacts with NBR1; this interaction promotes IL-12 secretion.

Its subcellular location is the secreted. Functionally, cytokine that can act as a growth factor for activated T and NK cells, enhance the lytic activity of NK/lymphokine-activated killer cells, and stimulate the production of IFN-gamma by resting PBMC. In terms of biological role, associates with IL23A to form the IL-23 interleukin, a heterodimeric cytokine which functions in innate and adaptive immunity. IL-23 may constitute with IL-17 an acute response to infection in peripheral tissues. IL-23 binds to a heterodimeric receptor complex composed of IL12RB1 and IL23R, activates the Jak-Stat signaling cascade, stimulates memory rather than naive T-cells and promotes production of pro-inflammatory cytokines. IL-23 induces autoimmune inflammation and thus may be responsible for autoimmune inflammatory diseases and may be important for tumorigenesis. The protein is Interleukin-12 subunit beta (IL12B) of Lama glama (Llama).